The sequence spans 295 residues: Protoheme IX farnesyltransferase (295 aa).

Helical transmembrane passes span 8–28 (VTKPGIIFGNLISVIGGFLLA), 35–55 (YPLFVWTLLGVSLVVASGCVF), 84–104 (ASLVYATLLGIAGFMLLWFGA), 107–127 (LACWLGVMGFVVYVGVYSLYM), 132–152 (VYGTLIGSLSGAAPPVIGYCA), 162–182 (AILLAIFSLWQMPHSYAIAIF), 208–228 (ITLYIVAFAVATLMLSLGGYA), 233–253 (LVVAAAVSVWWLGMALRGYKV), and 264–284 (FVFSIVAITALSVMMSVDFMV).

The protein belongs to the UbiA prenyltransferase family. Protoheme IX farnesyltransferase subfamily.

It is found in the cell inner membrane. It catalyses the reaction heme b + (2E,6E)-farnesyl diphosphate + H2O = Fe(II)-heme o + diphosphate. It functions in the pathway porphyrin-containing compound metabolism; heme O biosynthesis; heme O from protoheme: step 1/1. Converts heme B (protoheme IX) to heme O by substitution of the vinyl group on carbon 2 of heme B porphyrin ring with a hydroxyethyl farnesyl side group. The polypeptide is Protoheme IX farnesyltransferase (Klebsiella pneumoniae subsp. pneumoniae (strain ATCC 700721 / MGH 78578)).